We begin with the raw amino-acid sequence, 426 residues long: Histidine--tRNA ligase (426 aa).

The protein belongs to the class-II aminoacyl-tRNA synthetase family. In terms of assembly, homodimer.

The protein resides in the cytoplasm. It catalyses the reaction tRNA(His) + L-histidine + ATP = L-histidyl-tRNA(His) + AMP + diphosphate + H(+). This is Histidine--tRNA ligase from Geobacillus thermodenitrificans (strain NG80-2).